The following is a 160-amino-acid chain: pH-gated potassium channel KcsA (160 aa).

Residues 1–27 (MPPMLSGLLARLVKLLLGRHGSALHWR) are Cytoplasmic-facing. Residues 28–50 (AAGAATVLLVIVLLAGSYLAVLA) form a helical membrane-spanning segment. The Extracellular portion of the chain corresponds to 51 to 61 (ERGAPGAQLIT). Positions 62–72 (YPRALWWSVET) form an intramembrane region, helical; Pore-forming. Positions 73–80 (ATTVGYGD) form an intramembrane region, pore-forming. Residues 75–80 (TVGYGD) carry the Selectivity filter motif. Over 81-87 (LYPVTLW) the chain is Extracellular. A helical transmembrane segment spans residues 88–111 (GRLVAVVVMVAGITSFGLVTAALA). Topologically, residues 112–160 (TWFVGREQERRGHFVRHSEKAAEEAYTRTTRALHERFDRLERMLDDNRR) are cytoplasmic.

The protein belongs to the potassium channel family. In terms of assembly, homotetramer.

It is found in the cell membrane. Acts as a pH-gated potassium ion channel; changing the cytosolic pH from 7 to 4 opens the channel. This Streptomyces coelicolor (strain ATCC BAA-471 / A3(2) / M145) protein is pH-gated potassium channel KcsA (kcsA).